The chain runs to 176 residues: RING-H2 finger protein ATL14 (176 aa).

Residues 1 to 26 (MSITIPYDGSISREPSPSPPPPKANT) are disordered. Residues 37–57 (FLIGLIMIPVAITAFIFILTS) traverse the membrane as a helical segment. The RING-type; atypical zinc-finger motif lies at 115–157 (CVVCIDGFRQGQWCRKLPRCGHVFHRKCVDLWLIKVSTCPICR).

Belongs to the RING-type zinc finger family. ATL subfamily.

Its subcellular location is the membrane. It carries out the reaction S-ubiquitinyl-[E2 ubiquitin-conjugating enzyme]-L-cysteine + [acceptor protein]-L-lysine = [E2 ubiquitin-conjugating enzyme]-L-cysteine + N(6)-ubiquitinyl-[acceptor protein]-L-lysine.. Its pathway is protein modification; protein ubiquitination. The sequence is that of RING-H2 finger protein ATL14 (ATL14) from Arabidopsis thaliana (Mouse-ear cress).